Consider the following 336-residue polypeptide: Anthranilate phosphoribosyltransferase (336 aa).

5-phospho-alpha-D-ribose 1-diphosphate contacts are provided by residues glycine 82, 85 to 86, threonine 90, 92 to 95, 110 to 118, and serine 122; these read GD, NIST, and KHGNRSVSS. Residue glycine 82 coordinates anthranilate. Serine 94 provides a ligand contact to Mg(2+). Asparagine 113 is a binding site for anthranilate. Arginine 168 lines the anthranilate pocket. The Mg(2+) site is built by aspartate 227 and glutamate 228.

This sequence belongs to the anthranilate phosphoribosyltransferase family. In terms of assembly, homodimer. Mg(2+) serves as cofactor.

It catalyses the reaction N-(5-phospho-beta-D-ribosyl)anthranilate + diphosphate = 5-phospho-alpha-D-ribose 1-diphosphate + anthranilate. It participates in amino-acid biosynthesis; L-tryptophan biosynthesis; L-tryptophan from chorismate: step 2/5. Its function is as follows. Catalyzes the transfer of the phosphoribosyl group of 5-phosphorylribose-1-pyrophosphate (PRPP) to anthranilate to yield N-(5'-phosphoribosyl)-anthranilate (PRA). The sequence is that of Anthranilate phosphoribosyltransferase from Leptospira interrogans serogroup Icterohaemorrhagiae serovar Lai (strain 56601).